The chain runs to 1066 residues: FHIP family protein GH13096 (1066 aa).

A compositionally biased stretch (polar residues) spans 1 to 15 (MSWLRTSPLRQSLTR). A disordered region spans residues 1-33 (MSWLRTSPLRQSLTRNSGGNGSGGSGNSGNASA). Gly residues predominate over residues 18 to 27 (GGNGSGGSGN). Residue serine 512 is modified to Phosphoserine. Disordered stretches follow at residues 647–688 (SFKW…NSSG), 827–885 (DNSP…RSDN), and 942–1010 (SRGV…FNSE). The span at 658–687 (NDATTTTATSDPDVEHNNSSNHNNSSINSS) shows a compositional bias: low complexity. Serine 829 bears the Phosphoserine mark. The segment covering 836 to 856 (HQQQQLQHTTNSTHQQQQAQQ) has biased composition (low complexity). Residues 950-963 (PRGNTCETSLSTTP) show a composition bias toward polar residues. Over residues 967–996 (AQATSASSTNSSIGGSTQTLSATHSSSTLH) the composition is skewed to low complexity. Polar residues predominate over residues 1001 to 1010 (GPQTASFNSE).

The protein belongs to the FHIP family.

This chain is FHIP family protein GH13096, found in Drosophila grimshawi (Hawaiian fruit fly).